The following is a 458-amino-acid chain: Translation initiation factor eIF2B subunit gamma (458 aa).

Ser-291 carries the post-translational modification Phosphoserine.

The protein belongs to the eIF-2B gamma/epsilon subunits family. As to quaternary structure, component of the translation initiation factor 2B (eIF2B) complex which is a heterodecamer of two sets of five different subunits: alpha, beta, gamma, delta and epsilon. Subunits alpha, beta and delta comprise a regulatory subcomplex and subunits epsilon and gamma comprise a catalytic subcomplex. Within the complex, the hexameric regulatory complex resides at the center, with the two heterodimeric catalytic subcomplexes bound on opposite sides.

The protein localises to the cytoplasm. It is found in the cytosol. Its function is as follows. Acts as a component of the translation initiation factor 2B (eIF2B) complex, which catalyzes the exchange of GDP for GTP on the eukaryotic initiation factor 2 (eIF2) complex gamma subunit. Its guanine nucleotide exchange factor activity is repressed when bound to eIF2 complex phosphorylated on the alpha subunit, thereby limiting the amount of methionyl-initiator methionine tRNA available to the ribosome and consequently global translation is repressed. This Schizosaccharomyces pombe (strain 972 / ATCC 24843) (Fission yeast) protein is Translation initiation factor eIF2B subunit gamma (tif223).